The chain runs to 128 residues: Large ribosomal subunit protein mL51 (128 aa).

A mitochondrion-targeting transit peptide spans 1 to 31 (MAGSLSWVAGRRLWGLVPLACRSFFLGVPRL).

Belongs to the mitochondrion-specific ribosomal protein mL51 family. As to quaternary structure, component of the mitochondrial ribosome large subunit (39S) which comprises a 16S rRNA and about 50 distinct proteins. Interacts with OXA1L.

Its subcellular location is the mitochondrion. In Bos taurus (Bovine), this protein is Large ribosomal subunit protein mL51 (MRPL51).